A 318-amino-acid polypeptide reads, in one-letter code: Taste receptor type 2 member 117 (318 aa).

The Extracellular portion of the chain corresponds to 1-16; the sequence is MQHNLKTIFVISHSTL. A helical transmembrane segment spans residues 17 to 37; sequence TIILFTELVTGIIGNGFMALV. Residues 38-53 lie on the Cytoplasmic side of the membrane; the sequence is HCMDWLRRKKISLVNQ. The chain crosses the membrane as a helical span at residues 54–74; it reads ILTALAISRIFQLCLLFISLV. The Extracellular segment spans residues 75-93; it reads ISFSYPDLTTTSLIKVTCN. Residues 94–114 traverse the membrane as a helical segment; it reads LWIIVNHFNIWLATCLGIFYF. The Cytoplasmic portion of the chain corresponds to 115 to 134; it reads LKISNFSNSLFLYLKWRVEK. A helical membrane pass occupies residues 135–155; the sequence is VVLVTLLVSLVLLTLNSLLIN. Residues 156-189 lie on the Extracellular side of the membrane; it reads LEINICINEYQRNITYSFNSYYHANCHRQMLSLH. A glycan (N-linked (GlcNAc...) asparagine) is linked at asparagine 168. Residues 190–210 form a helical membrane-spanning segment; the sequence is IIFLSVPFVLSLSTFLLLIFS. At 211–238 the chain is on the cytoplasmic side; that stretch reads LGTHHKKMQQHVQGRRDASTMAHFKALQ. A helical transmembrane segment spans residues 239–259; the sequence is TVIAFLLLYSIFILSVLVQIW. At 260–268 the chain is on the extracellular side; that stretch reads KYELLKKNL. Residues 269–289 form a helical membrane-spanning segment; that stretch reads FILFCQVAYVAFPSFHSYILI. At 290–318 the chain is on the cytoplasmic side; the sequence is LGDMKMRQACLSVLWWQKFRKNYVEPLDL.

This sequence belongs to the G-protein coupled receptor T2R family.

It localises to the membrane. In terms of biological role, putative taste receptor which may play a role in the perception of bitterness. In Rattus norvegicus (Rat), this protein is Taste receptor type 2 member 117.